Consider the following 423-residue polypeptide: Testican-2 (423 aa).

The signal sequence occupies residues 1-22 (MRAPGSGRLALPLLLLAVVALA). Phosphoserine is present on Ser-72. 5 disulfide bridges follow: Cys-90–Cys-101, Cys-95–Cys-111, Cys-136–Cys-166, Cys-139–Cys-159, and Cys-148–Cys-180. In terms of domain architecture, Kazal-like spans 130–182 (GGKDSVCKPCHMAQLASVCGSDGHTYSSVCKLEQQACLSSKQLAVRCEGPCPC). N-linked (GlcNAc...) asparagine glycosylation is present at Asn-225. Residues 309–375 (KPPCLAELER…GTRMHGTPDC (67 aa)) enclose the Thyroglobulin type-1 domain. Intrachain disulfides connect Cys-312-Cys-336, Cys-347-Cys-354, and Cys-356-Cys-375. Residues Ser-382 and Ser-387 are each glycosylated (O-linked (Xyl...) (glycosaminoglycan) serine). The segment at 387–423 (SGVGWEDEEEKETEEAGEEAEEEEGEAGEADDGGYIW) is disordered. The segment covering 391 to 423 (WEDEEEKETEEAGEEAEEEEGEAGEADDGGYIW) has biased composition (acidic residues).

Post-translationally, O-glycosylated; contains chondroitin sulfate and heparan sulfate. As to expression, brain specific.

The protein localises to the secreted. Its subcellular location is the extracellular space. The protein resides in the extracellular matrix. Its function is as follows. May participate in diverse steps of neurogenesis. Binds calcium. The polypeptide is Testican-2 (Spock2) (Mus musculus (Mouse)).